Here is a 197-residue protein sequence, read N- to C-terminus: uncharacterized protein (197 aa).

A helical membrane pass occupies residues 103-123; sequence LAIVLPVLANLIMCAMLAWYL.

The protein localises to the host membrane. This is an uncharacterized protein from Equus caballus (Horse).